The following is a 299-amino-acid chain: Exosome complex component rrp42 (299 aa).

This sequence belongs to the RNase PH family. In terms of assembly, component of the RNA exosome complex. Specifically part of the catalytically inactive RNA exosome core complex (Exo-9) which may associate with the catalytic subunits rrp6 and dis3 in cytoplasmic- and nuclear-specific RNA exosome complex forms. Exo-9 is formed by a hexameric base ring of RNase PH domain-containing subunits and a cap ring consisting of csl4, rrp4 and rrp40.

Its subcellular location is the cytoplasm. It localises to the nucleus. The protein localises to the nucleolus. Functionally, non-catalytic component of the RNA exosome complex which has 3'-&gt;5' exoribonuclease activity and participates in a multitude of cellular RNA processing and degradation events. In the nucleus, the RNA exosome complex is involved in proper maturation of stable RNA species such as rRNA, snRNA and snoRNA, in the elimination of RNA processing by-products and non-coding 'pervasive' transcripts, such as antisense RNA species and cryptic unstable transcripts (CUTs), and of mRNAs with processing defects, thereby limiting or excluding their export to the cytoplasm. In the cytoplasm, the RNA exosome complex is involved in general mRNA turnover and in RNA surveillance pathways, preventing translation of aberrant mRNAs. The catalytic inactive RNA exosome core complex of 9 subunits (Exo-9) is proposed to play a pivotal role in the binding and presentation of RNA for ribonucleolysis, and to serve as a scaffold for the association with catalytic subunits and accessory proteins or complexes. ski6 is part of the hexameric ring of RNase PH domain-containing subunits proposed to form a central channel which threads RNA substrates for degradation. This is Exosome complex component rrp42 (rrp42) from Schizosaccharomyces pombe (strain 972 / ATCC 24843) (Fission yeast).